The chain runs to 384 residues: 1-deoxy-D-xylulose 5-phosphate reductoisomerase (384 aa).

The NADPH site is built by Thr-10, Gly-11, Ser-12, Ile-13, Arg-37, Asn-38, and Asn-124. 1-deoxy-D-xylulose 5-phosphate is bound at residue Lys-125. Residue Glu-126 coordinates NADPH. Mn(2+) is bound at residue Asp-150. Ser-151, Glu-152, Ser-176, and His-199 together coordinate 1-deoxy-D-xylulose 5-phosphate. Position 152 (Glu-152) interacts with Mn(2+). Residue Gly-205 coordinates NADPH. Positions 212, 217, 218, and 221 each coordinate 1-deoxy-D-xylulose 5-phosphate. Glu-221 contributes to the Mn(2+) binding site.

The protein belongs to the DXR family. Mg(2+) serves as cofactor. Mn(2+) is required as a cofactor.

The catalysed reaction is 2-C-methyl-D-erythritol 4-phosphate + NADP(+) = 1-deoxy-D-xylulose 5-phosphate + NADPH + H(+). It participates in isoprenoid biosynthesis; isopentenyl diphosphate biosynthesis via DXP pathway; isopentenyl diphosphate from 1-deoxy-D-xylulose 5-phosphate: step 1/6. Its function is as follows. Catalyzes the NADPH-dependent rearrangement and reduction of 1-deoxy-D-xylulose-5-phosphate (DXP) to 2-C-methyl-D-erythritol 4-phosphate (MEP). The chain is 1-deoxy-D-xylulose 5-phosphate reductoisomerase from Clostridium perfringens (strain ATCC 13124 / DSM 756 / JCM 1290 / NCIMB 6125 / NCTC 8237 / Type A).